The following is a 110-amino-acid chain: Thioredoxin (110 aa).

One can recognise a Thioredoxin domain in the interval 2–110 (SALLVEIDKD…IDAMIAKHVG (109 aa)). A disulfide bond links Cys-33 and Cys-36.

It belongs to the thioredoxin family.

Its function is as follows. Participates in various redox reactions through the reversible oxidation of its active center dithiol to a disulfide and catalyzes dithiol-disulfide exchange reactions. The polypeptide is Thioredoxin (trxA) (Peptoclostridium acidaminophilum (Eubacterium acidaminophilum)).